A 430-amino-acid chain; its full sequence is Delta-aminolevulinic acid dehydratase 1, chloroplastic (430 aa).

The N-terminal 52 residues, 1–52 (MATTPIFNASCSFPSTRGIDCKSYIGLRSNVSKVSVASSRIATSQRRNLVVR), are a transit peptide targeting the chloroplast. Pro residues predominate over residues 82–91 (EAPPVPPKPA). The segment at 82–101 (EAPPVPPKPAAPVGTPIIKP) is disordered. Lysine 298 serves as the catalytic Schiff-base intermediate with substrate. 2 residues coordinate 5-aminolevulinate: arginine 308 and lysine 320. Glutamate 336 is a Mg(2+) binding site. Lysine 351 (schiff-base intermediate with substrate) is an active-site residue. Residues serine 377 and tyrosine 416 each coordinate 5-aminolevulinate.

This sequence belongs to the ALAD family. In terms of assembly, homooctamer. It depends on Mg(2+) as a cofactor. Highly expressed in cotyledons during dark-to-light transition.

It localises to the plastid. Its subcellular location is the chloroplast. It catalyses the reaction 2 5-aminolevulinate = porphobilinogen + 2 H2O + H(+). It functions in the pathway porphyrin-containing compound metabolism; protoporphyrin-IX biosynthesis; coproporphyrinogen-III from 5-aminolevulinate: step 1/4. It participates in porphyrin-containing compound metabolism; chlorophyll biosynthesis. Catalyzes an early step in the biosynthesis of tetrapyrroles. Binds two molecules of 5-aminolevulinate per subunit, each at a distinct site, and catalyzes their condensation to form porphobilinogen. The chain is Delta-aminolevulinic acid dehydratase 1, chloroplastic (HEMB1) from Arabidopsis thaliana (Mouse-ear cress).